The primary structure comprises 545 residues: SLAIN motif-containing protein 1 (545 aa).

Positions 14–53 (TTNGLVANAELEVKKLQELVRKLEKQNEQLRNRASAVSNC) form a coiled coil. Low complexity-rich tracts occupy residues 268 to 286 (TTSTCSSVSRPRSSFSLYS) and 466 to 481 (IPSSTSLQSLSSSGIP). Disordered regions lie at residues 268–342 (TTST…IRDC) and 461–526 (QGGS…LQPP). The span at 503–522 (STANGSSIPRSKIAQPQRSF) shows a compositional bias: polar residues.

It belongs to the SLAIN motif-containing family.

The protein resides in the cytoplasm. It is found in the cytoskeleton. Microtubule plus-end tracking protein that might be involved in the regulation of cytoplasmic microtubule dynamics, microtubule organization and microtubule elongation. This Xenopus tropicalis (Western clawed frog) protein is SLAIN motif-containing protein 1 (slain1).